A 302-amino-acid polypeptide reads, in one-letter code: Acetylglutamate kinase (302 aa).

Substrate-binding positions include 68-69 (GG), Arg-90, and Asn-195.

This sequence belongs to the acetylglutamate kinase family. ArgB subfamily.

The protein resides in the cytoplasm. The catalysed reaction is N-acetyl-L-glutamate + ATP = N-acetyl-L-glutamyl 5-phosphate + ADP. It functions in the pathway amino-acid biosynthesis; L-arginine biosynthesis; N(2)-acetyl-L-ornithine from L-glutamate: step 2/4. Catalyzes the ATP-dependent phosphorylation of N-acetyl-L-glutamate. In Marinomonas sp. (strain MWYL1), this protein is Acetylglutamate kinase.